The chain runs to 221 residues: Probable molybdenum cofactor guanylyltransferase (221 aa).

Residues 17–19 (LAG), K29, D74, and D103 contribute to the GTP site. D103 is a Mg(2+) binding site.

The protein belongs to the MobA family. The cofactor is Mg(2+).

It localises to the cytoplasm. It carries out the reaction Mo-molybdopterin + GTP + H(+) = Mo-molybdopterin guanine dinucleotide + diphosphate. Functionally, transfers a GMP moiety from GTP to Mo-molybdopterin (Mo-MPT) cofactor (Moco or molybdenum cofactor) to form Mo-molybdopterin guanine dinucleotide (Mo-MGD) cofactor. The sequence is that of Probable molybdenum cofactor guanylyltransferase from Peptoclostridium acidaminophilum (Eubacterium acidaminophilum).